The following is a 110-amino-acid chain: uncharacterized protein (110 aa).

This is an uncharacterized protein from Homo sapiens (Human).